The sequence spans 141 residues: uncharacterized protein (141 aa).

This is an uncharacterized protein from Schizosaccharomyces pombe (strain 972 / ATCC 24843) (Fission yeast).